Reading from the N-terminus, the 118-residue chain is UPF0102 protein Francci3_3586 (118 aa).

Belongs to the UPF0102 family.

The sequence is that of UPF0102 protein Francci3_3586 from Frankia casuarinae (strain DSM 45818 / CECT 9043 / HFP020203 / CcI3).